A 313-amino-acid chain; its full sequence is N-acetyl-gamma-glutamyl-phosphate reductase (313 aa).

The active site involves cysteine 117.

Belongs to the NAGSA dehydrogenase family. Type 2 subfamily.

The protein localises to the cytoplasm. The catalysed reaction is N-acetyl-L-glutamate 5-semialdehyde + phosphate + NADP(+) = N-acetyl-L-glutamyl 5-phosphate + NADPH + H(+). It functions in the pathway amino-acid biosynthesis; L-arginine biosynthesis; N(2)-acetyl-L-ornithine from L-glutamate: step 3/4. In terms of biological role, catalyzes the NADPH-dependent reduction of N-acetyl-5-glutamyl phosphate to yield N-acetyl-L-glutamate 5-semialdehyde. The chain is N-acetyl-gamma-glutamyl-phosphate reductase from Burkholderia cenocepacia (strain ATCC BAA-245 / DSM 16553 / LMG 16656 / NCTC 13227 / J2315 / CF5610) (Burkholderia cepacia (strain J2315)).